Reading from the N-terminus, the 342-residue chain is Platelet-activating factor receptor (342 aa).

Residues 1–16 (MEPNNSFRVDSEFRYT) are Extracellular-facing. N4 carries N-linked (GlcNAc...) asparagine glycosylation. The chain crosses the membrane as a helical span at residues 17 to 38 (LFPIFYSIVFVLGVIANSYVLW). At 39–54 (VFARLYPSKKFNEIKI) the chain is on the cytoplasmic side. A helical membrane pass occupies residues 55-74 (FMVNLTMADLLFLVTLPLWI). The Extracellular segment spans residues 75–91 (VYYYNQGDWILPKFLCN). Cysteines 90 and 173 form a disulfide. The chain crosses the membrane as a helical span at residues 92 to 113 (LAGCFFFINTYCSVAFLAVITY). Topologically, residues 114-133 (NRFQAVTRPIKTAQATTRKR) are cytoplasmic. A helical membrane pass occupies residues 134–155 (GILLSLIIWVSIVGAASYFFVL). The Extracellular portion of the chain corresponds to 156-184 (DSTNREPNKTGSANITRCFEHYEKGSIPV). Residues N163 and N169 are each glycosylated (N-linked (GlcNAc...) asparagine). A helical transmembrane segment spans residues 185-205 (LTIHIFLVFSFFLVFLIILFC). Topologically, residues 206–233 (NLVIIRTLLTQQVQIQRNAEVKRRALWM) are cytoplasmic. A helical transmembrane segment spans residues 234–254 (VCTVLAVFIICFVPHHLVQLP). Residues 255-276 (WTLAELGFQDTDFHQAINDAHQ) are Extracellular-facing. A helical transmembrane segment spans residues 277-296 (VTLCLLSTNCVLDPIIYCFL). The Cytoplasmic portion of the chain corresponds to 297–342 (TKKFRKHLTEKLYSMRESRKCSRATSETGTEVVMQLKDVPVKSLKY).

The protein belongs to the G-protein coupled receptor 1 family. Interacts with ARRB1. As to expression, found in oviductal epithelial and stroma cells. Levels in the oviduct are raised at days 2-4 of both pregnancy and of the estrus cycle. In the endometrium, localization is predominantly to the apical borders of glandular and luminal epithelial cells. Expressed at lower levels in endometrial stromal cells. Levels in the endometrium are increased at day 20 of pregnancy (at protein level).

It is found in the cell membrane. Its function is as follows. Receptor for platelet activating factor, a chemotactic phospholipid mediator that possesses potent inflammatory, smooth-muscle contractile and hypotensive activity. Seems to mediate its action via a G protein that activates a phosphatidylinositol-calcium second messenger system. May be involved in the morphological and physical modifications of the oviduct and uterus during the estrus cycle and early pregnancy. The polypeptide is Platelet-activating factor receptor (Bos taurus (Bovine)).